Consider the following 184-residue polypeptide: dCTP deaminase (184 aa).

DCTP is bound by residues lysine 107–arginine 112, threonine 131–glutamate 133, glutamine 152, tyrosine 166, and glutamine 176. Glutamate 133 acts as the Proton donor/acceptor in catalysis.

This sequence belongs to the dCTP deaminase family. As to quaternary structure, homotrimer.

It catalyses the reaction dCTP + H2O + H(+) = dUTP + NH4(+). It functions in the pathway pyrimidine metabolism; dUMP biosynthesis; dUMP from dCTP (dUTP route): step 1/2. Its function is as follows. Catalyzes the deamination of dCTP to dUTP. The chain is dCTP deaminase from Paramagnetospirillum magneticum (strain ATCC 700264 / AMB-1) (Magnetospirillum magneticum).